The chain runs to 440 residues: Chromosome partition protein MukF (440 aa).

The leucine-zipper stretch occupies residues 208–236 (LSETSGTLRELQDTLEAAGDKLQANLLRI).

This sequence belongs to the MukF family. Interacts, and probably forms a ternary complex, with MukE and MukB via its C-terminal region. The complex formation is stimulated by calcium or magnesium. It is required for an interaction between MukE and MukB.

Its subcellular location is the cytoplasm. It is found in the nucleoid. In terms of biological role, involved in chromosome condensation, segregation and cell cycle progression. May participate in facilitating chromosome segregation by condensation DNA from both sides of a centrally located replisome during cell division. Not required for mini-F plasmid partitioning. Probably acts via its interaction with MukB and MukE. Overexpression results in anucleate cells. It has a calcium binding activity. The sequence is that of Chromosome partition protein MukF from Shigella boydii serotype 18 (strain CDC 3083-94 / BS512).